We begin with the raw amino-acid sequence, 118 residues long: Large ribosomal subunit protein bL17 (118 aa).

It belongs to the bacterial ribosomal protein bL17 family. In terms of assembly, part of the 50S ribosomal subunit. Contacts protein L32.

The polypeptide is Large ribosomal subunit protein bL17 (Phytoplasma australiense).